We begin with the raw amino-acid sequence, 279 residues long: High choriolytic enzyme 2 (279 aa).

The signal sequence occupies residues 1–20 (MNLASSACLLLLFLLGIAQA). The propeptide at 21-79 (LPVQNEEGHEEGNKEGHGEEGVEEGDEDDFVDFTTRILTSNNNTDQLLLEGDLVAPTNR) is activation peptide. Residues 26-40 (EEGHEEGNKEGHGEE) show a composition bias toward basic and acidic residues. Positions 26–46 (EEGHEEGNKEGHGEEGVEEGD) are disordered. A glycan (N-linked (GlcNAc...) asparagine) is linked at Asn62. Residues 80–279 (NAMKCWYNSC…TRSNVLYNCR (200 aa)) form the Peptidase M12A domain. Cystine bridges form between Cys84–Cys89, Cys129–Cys278, and Cys150–Cys170. His178 lines the Zn(2+) pocket. Glu179 is an active-site residue. His182 and His188 together coordinate Zn(2+).

It depends on Zn(2+) as a cofactor.

The protein resides in the zymogen granule. The catalysed reaction is Hydrolysis of the inner layer of fish egg envelope. Also hydrolysis of casein and small molecule substrates such as succinyl-Leu-Leu-Val-Tyr-|-7-(4-methyl)coumarylamide.. Its function is as follows. Participates in the breakdown of the egg envelope, which is derived from the egg extracellular matrix, at the time of hatching. Thus allowing the newly hatched fish to swim free. HCE binds tightly to the egg envelope while it exerts the choriolytic swelling action. The protein is High choriolytic enzyme 2 (hceb) of Oryzias latipes (Japanese rice fish).